We begin with the raw amino-acid sequence, 148 residues long: uncharacterized protein (148 aa).

Residues 2-63 (LDELDKRILY…LINPFKAGYE (62 aa)) form the HTH asnC-type domain. Residues 21-40 (YSEIARILGVPESTVRVRVK) constitute a DNA-binding region (H-T-H motif).

This is an uncharacterized protein from Pyrococcus furiosus (strain ATCC 43587 / DSM 3638 / JCM 8422 / Vc1).